We begin with the raw amino-acid sequence, 342 residues long: Probable deoxyhypusine synthase (342 aa).

The active-site Nucleophile is lysine 307.

This sequence belongs to the deoxyhypusine synthase family. Requires NAD(+) as cofactor.

The catalysed reaction is [eIF5A protein]-L-lysine + spermidine = [eIF5A protein]-deoxyhypusine + propane-1,3-diamine. It participates in protein modification; eIF5A hypusination. In terms of biological role, catalyzes the NAD-dependent oxidative cleavage of spermidine and the subsequent transfer of the butylamine moiety of spermidine to the epsilon-amino group of a specific lysine residue of the eIF-5A precursor protein to form the intermediate deoxyhypusine residue. This Pyrococcus horikoshii (strain ATCC 700860 / DSM 12428 / JCM 9974 / NBRC 100139 / OT-3) protein is Probable deoxyhypusine synthase (dys).